An 82-amino-acid polypeptide reads, in one-letter code: DNA-directed RNA polymerase subunit Rpo5 (82 aa).

The protein belongs to the archaeal Rpo5/eukaryotic RPB5 RNA polymerase subunit family. Part of the RNA polymerase complex.

The protein resides in the cytoplasm. The catalysed reaction is RNA(n) + a ribonucleoside 5'-triphosphate = RNA(n+1) + diphosphate. DNA-dependent RNA polymerase (RNAP) catalyzes the transcription of DNA into RNA using the four ribonucleoside triphosphates as substrates. This is DNA-directed RNA polymerase subunit Rpo5 from Pyrococcus abyssi (strain GE5 / Orsay).